Reading from the N-terminus, the 275-residue chain is Activator of basal transcription 1 (275 aa).

At Met1 the chain carries N-acetylmethionine. Composition is skewed to acidic residues over residues 1–10 (MEVEGLELDT) and 25–34 (AEEEQEESED). The tract at residues 1 to 39 (MEVEGLELDTAELGPLEGSHQKLEAEEEQEESEDAAGGS) is disordered. One can recognise an RRM domain in the interval 46 to 145 (GIVYLGHIPP…RRRSPFRYDL (100 aa)). Residues 164-194 (AFERQVRRQRLRAEVAQAKRETDFYLRSVER) are a coiled coil. A disordered region spans residues 200–275 (AADGDSTRPN…RGNSSPARNS (76 aa)). Polar residues predominate over residues 262–275 (PSESRGNSSPARNS).

Belongs to the ESF2/ABP1 family. As to quaternary structure, interacts with ESF1/ABTAP. Interacts with IGHMBP2.

It is found in the nucleus. The protein resides in the nucleolus. Functionally, could be a novel TATA-binding protein (TBP) which can function as a basal transcription activator. Can act as a regulator of basal transcription for class II genes. This is Activator of basal transcription 1 (ABT1) from Bos taurus (Bovine).